We begin with the raw amino-acid sequence, 86 residues long: Small ribosomal subunit protein bS16 (86 aa).

The protein belongs to the bacterial ribosomal protein bS16 family.

The protein is Small ribosomal subunit protein bS16 of Stenotrophomonas maltophilia (strain K279a).